The sequence spans 340 residues: Protein pelota homolog (340 aa).

This sequence belongs to the eukaryotic release factor 1 family. Pelota subfamily. In terms of assembly, monomer. The cofactor is a divalent metal cation.

Its subcellular location is the cytoplasm. Its function is as follows. May function in recognizing stalled ribosomes, interact with stem-loop structures in stalled mRNA molecules, and effect endonucleolytic cleavage of the mRNA. May play a role in the release non-functional ribosomes and degradation of damaged mRNAs. Has endoribonuclease activity. This chain is Protein pelota homolog, found in Methanosphaerula palustris (strain ATCC BAA-1556 / DSM 19958 / E1-9c).